A 444-amino-acid chain; its full sequence is Magnesium transporter MRS2-F (444 aa).

A disordered region spans residues 128 to 155 (FTDMEGESSAVTSPFPALTSTTPNELEM). The segment covering 145–155 (LTSTTPNELEM) has biased composition (polar residues). Residues 195 to 258 (VCLESACRSL…QKVRDELEHL (64 aa)) are a coiled coil. A helical transmembrane segment spans residues 370-390 (GVMLSTATVVITAGVAVVGLF). Residues 391-393 (GMN) carry the Required for magnesium transport activity motif. A helical membrane pass occupies residues 415-435 (FWETTLGTIAGCTVMYIVAMG).

This sequence belongs to the CorA metal ion transporter (MIT) (TC 1.A.35.5) family.

It localises to the membrane. Magnesium transporter that may mediate the influx of magnesium. This Oryza sativa subsp. indica (Rice) protein is Magnesium transporter MRS2-F (MRS2-F).